We begin with the raw amino-acid sequence, 359 residues long: Norspermidine sensor (359 aa).

An N-terminal signal peptide occupies residues 1-33; it reads MTNFCNEWVSYSQMIKRFLSLMVLNTVCYQASA.

The protein belongs to the bacterial solute-binding protein PotD/PotF family.

It localises to the periplasm. Its function is as follows. Acts as a sensor of norspermidine and enhances biofilm formation. When complexed to norspermidine, could interact with the periplasmic portion of MbaA to regulate its enzymatic activity. The chain is Norspermidine sensor (nspS) from Vibrio cholerae serotype O1 (strain ATCC 39315 / El Tor Inaba N16961).